A 209-amino-acid polypeptide reads, in one-letter code: Ribosomal RNA large subunit methyltransferase E (209 aa).

Residues Gly-63, Trp-65, Asp-83, Asp-99, and Asp-124 each contribute to the S-adenosyl-L-methionine site. Residue Lys-164 is the Proton acceptor of the active site.

This sequence belongs to the class I-like SAM-binding methyltransferase superfamily. RNA methyltransferase RlmE family.

The protein resides in the cytoplasm. It carries out the reaction uridine(2552) in 23S rRNA + S-adenosyl-L-methionine = 2'-O-methyluridine(2552) in 23S rRNA + S-adenosyl-L-homocysteine + H(+). In terms of biological role, specifically methylates the uridine in position 2552 of 23S rRNA at the 2'-O position of the ribose in the fully assembled 50S ribosomal subunit. The chain is Ribosomal RNA large subunit methyltransferase E from Pseudoalteromonas atlantica (strain T6c / ATCC BAA-1087).